The chain runs to 96 residues: Large ribosomal subunit protein eL43 (96 aa).

The segment at 41–62 (CPVCGFMKLKRISTSIWECKKC) adopts a C4-type zinc-finger fold.

The protein belongs to the eukaryotic ribosomal protein eL43 family. It depends on Zn(2+) as a cofactor.

This chain is Large ribosomal subunit protein eL43, found in Methanococcus aeolicus (strain ATCC BAA-1280 / DSM 17508 / OCM 812 / Nankai-3).